We begin with the raw amino-acid sequence, 617 residues long: BPI fold-containing family B member 4 (617 aa).

A signal peptide spans 1-17 (MWTAWCVAALSVAAVCG). Positions 124–149 (RPSDSAYHRGPGRYRSAADPSSAGRL) are disordered. Residue asparagine 275 is glycosylated (N-linked (GlcNAc...) asparagine). Cysteines 297 and 334 form a disulfide.

This sequence belongs to the BPI/LBP/Plunc superfamily. BPI/LBP family. Highly expressed in olfactory mucosa but undetectable in thymus, kidney, lung, brain, spleen and liver.

It is found in the secreted. The protein localises to the cytoplasm. Functionally, may have the capacity to recognize and bind specific classes of odorants. May act as a carrier molecule, transporting odorants across the mucus layer to access receptor sites. May serve as a primary defense mechanism by recognizing and removing potentially harmful odorants or pathogenic microorganisms from the mucosa or clearing excess odorant from mucus to enable new odorant stimuli to be received. The chain is BPI fold-containing family B member 4 (Bpifb4) from Rattus norvegicus (Rat).